Reading from the N-terminus, the 490-residue chain is tRNA modification GTPase MnmE (490 aa).

The (6S)-5-formyl-5,6,7,8-tetrahydrofolate site is built by arginine 23, glutamate 80, and lysine 133. In terms of domain architecture, TrmE-type G spans 229 to 412; sequence GIEVVIAGQP…LRRILLEVAG (184 aa). Asparagine 239 lines the K(+) pocket. GTP contacts are provided by residues 239 to 244, 258 to 264, and 283 to 286; these read NAGKSS, TPVAGTT, and DTAG. Serine 243 is a Mg(2+) binding site. 3 residues coordinate K(+): threonine 258, valine 260, and threonine 263. Threonine 264 provides a ligand contact to Mg(2+). The segment covering 366–382 has biased composition (low complexity); it reads PTAPTESAAVPPASARP. Residues 366–388 are disordered; that stretch reads PTAPTESAAVPPASARPAPAPRP. 393–395 is a binding site for GTP; the sequence is SAR. A (6S)-5-formyl-5,6,7,8-tetrahydrofolate-binding site is contributed by lysine 490.

This sequence belongs to the TRAFAC class TrmE-Era-EngA-EngB-Septin-like GTPase superfamily. TrmE GTPase family. Homodimer. Heterotetramer of two MnmE and two MnmG subunits. It depends on K(+) as a cofactor.

The protein resides in the cytoplasm. Exhibits a very high intrinsic GTPase hydrolysis rate. Involved in the addition of a carboxymethylaminomethyl (cmnm) group at the wobble position (U34) of certain tRNAs, forming tRNA-cmnm(5)s(2)U34. The protein is tRNA modification GTPase MnmE of Verminephrobacter eiseniae (strain EF01-2).